The sequence spans 359 residues: 4'-phosphopantetheinyl transferase A (359 aa).

Belongs to the P-Pant transferase superfamily.

It carries out the reaction apo-[ACP] + CoA = holo-[ACP] + adenosine 3',5'-bisphosphate + H(+). With respect to regulation, activity is inhibited bythe antifunfal copmpounds PD 404,182, 6-nitroso-1,2-benzopyrone, and calmidazolium chloride with IC(50) values of 3.9 uM, 35.2 uM, and 19.2 uM, respectively. Acyl-carrier-protein synthase that transfers the 4'-phosphopantetheine moiety from coenzyme A to a Ser of an acyl-carrier-protein. The 4'-phosphopantetheine (4'-PPT) portion of CoA provides the essential prosthetic group for a number of carrier proteins and multi-domain enzymes, priming them for the acceptance of acyl building blocks in fatty acid synthesis and many aspects of secondary metabolism mediated by polyketide synthases (PKSs) and non-ribosomal peptide synthetases (NRPSs). PptA is able to transfer the cofactor to a broad range of enzymes with acyl- or peptidyl-carrier protein domains and activates target enzymes involved in the synthesis of lysine, but also secondary metabolites including gliotoxin, fumigaclavine C, fumiquinazole A, fumiquinazoline C, pyripyroprene A, fumagillin, the siderophores triacetylfusarinine C (TAFC) and ferricrocin (FC), and dihydroxy naphthalene (DHN)-melanin. Plays an essential role in virulence. This is 4'-phosphopantetheinyl transferase A from Aspergillus fumigatus (strain ATCC MYA-4609 / CBS 101355 / FGSC A1100 / Af293) (Neosartorya fumigata).